Here is a 275-residue protein sequence, read N- to C-terminus: Large ribosomal subunit protein uL2 (275 aa).

Disordered regions lie at residues 28–59 and 224–275; these read KPYAPLLDTQSSTAGRNNNGHITTRHKGGGHK and AMNP…RHKR. The segment covering 35-46 has biased composition (polar residues); it reads DTQSSTAGRNNN. A compositionally biased stretch (basic residues) spans 50 to 59; that stretch reads TTRHKGGGHK.

This sequence belongs to the universal ribosomal protein uL2 family. As to quaternary structure, part of the 50S ribosomal subunit. Forms a bridge to the 30S subunit in the 70S ribosome.

In terms of biological role, one of the primary rRNA binding proteins. Required for association of the 30S and 50S subunits to form the 70S ribosome, for tRNA binding and peptide bond formation. It has been suggested to have peptidyltransferase activity; this is somewhat controversial. Makes several contacts with the 16S rRNA in the 70S ribosome. This is Large ribosomal subunit protein uL2 from Paraburkholderia phymatum (strain DSM 17167 / CIP 108236 / LMG 21445 / STM815) (Burkholderia phymatum).